A 392-amino-acid polypeptide reads, in one-letter code: MSVIKMTDLDLAGKRVLIREDLNVPVKDGKVTSDARIRASLPTIEHAMKAGAKVMLMSHLGRPEEGVFSEEDSLKPVAEHLSGLLGKEVRLVRDYLDGVDVADGEVVLLENVRFNKGEKKNEEGLSRKYAALCDVYVMDAFGTAHRAQASTHGAGQYAPVACAGPLLAAELEALGKALDNPKRPLVAIVGGSKVSTKLTVLESLSKVVDQLIVGGGIANTFIAAQGHPVGKSLYEADLVDEAKRLMAAAKAKGGDIPVPTDVVTGKEFSESTPASTKRVSEVAADDMIFDVGPDTAASYADMLRKAGTIVWNGPVGVFEFDQFAAGTKALGEAIADSDGFSIAGGGDTLAAIDKYGLASRISYISTGGGAFLEFLEGKKLPAVAMLEERAKG.

Substrate is bound by residues 21 to 23, R36, 59 to 62, R113, and R146; these read DLN and HLGR. Residues K197, E319, and 345–348 contribute to the ATP site; that span reads GGDT.

Belongs to the phosphoglycerate kinase family. In terms of assembly, monomer.

Its subcellular location is the cytoplasm. It catalyses the reaction (2R)-3-phosphoglycerate + ATP = (2R)-3-phospho-glyceroyl phosphate + ADP. The protein operates within carbohydrate degradation; glycolysis; pyruvate from D-glyceraldehyde 3-phosphate: step 2/5. The sequence is that of Phosphoglycerate kinase from Thioalkalivibrio sulfidiphilus (strain HL-EbGR7).